The primary structure comprises 264 residues: ATP synthase subunit a (264 aa).

The next 6 helical transmembrane spans lie at 32–52 (IDSL…FHSV), 89–109 (VIAP…FMDM), 134–154 (DLNI…YYSI), 177–197 (IPVN…SLAL), 208–228 (LIFI…TLGV), and 235–255 (LIFH…LTIV).

It belongs to the ATPase A chain family. As to quaternary structure, F-type ATPases have 2 components, CF(1) - the catalytic core - and CF(0) - the membrane proton channel. CF(1) has five subunits: alpha(3), beta(3), gamma(1), delta(1), epsilon(1). CF(0) has three main subunits: a(1), b(2) and c(9-12). The alpha and beta chains form an alternating ring which encloses part of the gamma chain. CF(1) is attached to CF(0) by a central stalk formed by the gamma and epsilon chains, while a peripheral stalk is formed by the delta and b chains.

It is found in the cell inner membrane. Functionally, key component of the proton channel; it plays a direct role in the translocation of protons across the membrane. This is ATP synthase subunit a from Shewanella piezotolerans (strain WP3 / JCM 13877).